Here is a 1028-residue protein sequence, read N- to C-terminus: MQAQRYRLIEQGNTIMDIDNEILRYWNDHAINEKIFKKEGTKKFVFLEGPPTANGRPHIGHAMTRTIKDIVLRYNTMTGHKIYRRYGGWDCHGLPVELEAEKYFGFKTKSDIINYGVEKFNSYCRDSVFRYIDEWKTVDQIIGFSIDHSGDYITLRNEYIESEWYVLKYIYENGLLYKDYTVVPYCPRCETSLSSHEVAQGYKDVKDPSVYVRFKEKGSENTYFVAWTTTPWTLPSNEFLVVNPDIEYSLIEYNNAKYYVASSRAQYIFKDFKVLKKMKGFELAGKGYEQLLPFLDPPAGALRVVTGDFVTDIDGSGIVHAAPAFGSDDYQIGKRENVPILNPVDKNGRFSDERLPWYGKKVREANEDIIVYLKNNGLLIKSEKYEHSYPFCYRCDTPLLYYPLDAWFIRVSSVRDKLVENNEKIRWKPDYLKHGRFGNFLDEAKDWNLSRDRFWGTPLPVWRCRNNHVRFIGSRKEIEEMGATVPQDLHRPYIDEVKFVCPDCGEEMRREPYVIDTWFDSGSATYAAMHYPFEDNFDPSSDLPVSFITEAIDQTRGWFYVLHVISTIMFNKNAYDSALSISFILDEQGRKMSKSKGNSVFALDYLKQVAPDSLRLFFLYGAPWKSKNLDRKIIDEVSRRVISTLLNVYSFFAYNANIDGFEFKGILEAKDTLDKWLISKINTFIIESRRAYDDLDFHEVVRLSMDFVDNLSNFYLRLSRRRFWAEDVTEDKLAAYSTLYTAIMTCSKVLAPIVPFVSDYLYLSLHGPYESIHLDSFPEPDTSKIDHDLEKRMDQAYSVIETVRRIRQEINIKGRQPVKEILLSGNIDPEIIPVVSQEVNAKEIRIVSSEQRPLKYTVDLKMETAAPILRSSVNSVREALKSIDGKAAFDAVQNGGKLRVLDHELTGEMLNISTIPDPDYGYSRDEKNGIDVFVNKRIDRNEYLEGLAREIVRRIQLMRKEMNLDYTDRINVWIDPVGDFSDAIDKFESYIKAETQCDSLNVGHTDDLRKWEIGDETIGIRIEKVVPK.

Residues P51–H61 carry the 'HIGH' region motif. A 'KMSKS' region motif is present at residues K591–S595. An ATP-binding site is contributed by K594.

This sequence belongs to the class-I aminoacyl-tRNA synthetase family. IleS type 2 subfamily. As to quaternary structure, monomer. It depends on Zn(2+) as a cofactor.

It localises to the cytoplasm. It catalyses the reaction tRNA(Ile) + L-isoleucine + ATP = L-isoleucyl-tRNA(Ile) + AMP + diphosphate. Its function is as follows. Catalyzes the attachment of isoleucine to tRNA(Ile). As IleRS can inadvertently accommodate and process structurally similar amino acids such as valine, to avoid such errors it has two additional distinct tRNA(Ile)-dependent editing activities. One activity is designated as 'pretransfer' editing and involves the hydrolysis of activated Val-AMP. The other activity is designated 'posttransfer' editing and involves deacylation of mischarged Val-tRNA(Ile). This is Isoleucine--tRNA ligase from Thermoplasma volcanium (strain ATCC 51530 / DSM 4299 / JCM 9571 / NBRC 15438 / GSS1).